The primary structure comprises 300 residues: Probable alpha-L-glutamate ligase (300 aa).

Residues 104–287 (LQLLARQGID…IAGRMIQWIE (184 aa)) enclose the ATP-grasp domain. ATP is bound by residues Lys141, 178–179 (EY), Asp187, and 211–213 (RSN). Mg(2+) contacts are provided by Asp248, Glu260, and Asn262. Positions 248, 260, and 262 each coordinate Mn(2+).

Belongs to the RimK family. Requires Mg(2+) as cofactor. Mn(2+) serves as cofactor.

The sequence is that of Probable alpha-L-glutamate ligase from Citrobacter koseri (strain ATCC BAA-895 / CDC 4225-83 / SGSC4696).